Reading from the N-terminus, the 254-residue chain is 5-oxoprolinase subunit A (254 aa).

It belongs to the LamB/PxpA family. Forms a complex composed of PxpA, PxpB and PxpC.

The enzyme catalyses 5-oxo-L-proline + ATP + 2 H2O = L-glutamate + ADP + phosphate + H(+). In terms of biological role, catalyzes the cleavage of 5-oxoproline to form L-glutamate coupled to the hydrolysis of ATP to ADP and inorganic phosphate. The chain is 5-oxoprolinase subunit A from Burkholderia ambifaria (strain MC40-6).